The following is a 95-amino-acid chain: Secreted RxLR effector protein 20 (95 aa).

The signal sequence occupies residues 1 to 20 (MQSPYIILFALVTLLGSISG). Positions 47–50 (RLLR) match the RxLR motif.

This sequence belongs to the RxLR effector family.

The protein localises to the secreted. Its subcellular location is the host nucleus. It localises to the host cytoplasm. Secreted effector that partially suppresses the host cell death induced by cell death-inducing proteins. This chain is Secreted RxLR effector protein 20, found in Plasmopara viticola (Downy mildew of grapevine).